The primary structure comprises 1170 residues: Probable mRNA-capping enzyme (1170 aa).

Lysine 292 acts as the N6-GMP-lysine intermediate in catalysis. The region spanning 684 to 1007 is the mRNA cap 0 methyltransferase domain; the sequence is SNAAGMRAFN…LNRYYVFRKT (324 aa). 693–694 is a binding site for mRNA; that stretch reads NN. S-adenosyl-L-methionine-binding positions include lysine 697, glycine 715, aspartate 737, and 813 to 815; that span reads QFT.

The protein in the N-terminal section; belongs to the dsDNA virus mRNA guanylyltransferase family. In the C-terminal section; belongs to the class I-like SAM-binding methyltransferase superfamily. mRNA cap 0 methyltransferase family.

Its subcellular location is the virion. The enzyme catalyses a 5'-end triphospho-ribonucleoside in mRNA + H2O = a 5'-end diphospho-ribonucleoside in mRNA + phosphate + H(+). It catalyses the reaction a 5'-end diphospho-ribonucleoside in mRNA + GTP + H(+) = a 5'-end (5'-triphosphoguanosine)-ribonucleoside in mRNA + diphosphate. It carries out the reaction a 5'-end (5'-triphosphoguanosine)-ribonucleoside in mRNA + S-adenosyl-L-methionine = a 5'-end (N(7)-methyl 5'-triphosphoguanosine)-ribonucleoside in mRNA + S-adenosyl-L-homocysteine. It participates in mRNA processing; mRNA capping. Its function is as follows. Responsible for methylating the 5'-cap structure of mRNAs. In Acanthamoeba polyphaga mimivirus (APMV), this protein is Probable mRNA-capping enzyme.